The sequence spans 156 residues: Methylated-DNA--protein-cysteine methyltransferase (156 aa).

Cysteine 126 functions as the Nucleophile; methyl group acceptor in the catalytic mechanism.

The protein belongs to the MGMT family.

It is found in the cytoplasm. The catalysed reaction is a 6-O-methyl-2'-deoxyguanosine in DNA + L-cysteinyl-[protein] = S-methyl-L-cysteinyl-[protein] + a 2'-deoxyguanosine in DNA. It carries out the reaction a 4-O-methyl-thymidine in DNA + L-cysteinyl-[protein] = a thymidine in DNA + S-methyl-L-cysteinyl-[protein]. Its function is as follows. Involved in the cellular defense against the biological effects of O6-methylguanine (O6-MeG) and O4-methylthymine (O4-MeT) in DNA. Repairs the methylated nucleobase in DNA by stoichiometrically transferring the methyl group to a cysteine residue in the enzyme. This is a suicide reaction: the enzyme is irreversibly inactivated. This is Methylated-DNA--protein-cysteine methyltransferase from Methanosarcina acetivorans (strain ATCC 35395 / DSM 2834 / JCM 12185 / C2A).